Here is a 587-residue protein sequence, read N- to C-terminus: DELLA protein GAIP-B (587 aa).

The segment at 1-23 is disordered; the sequence is MKREHHHLHPRPDPPSMAAAPNG. The DELLA motif signature appears at 46-50; the sequence is DELLA. One can recognise a GRAS domain in the interval 209–577; the sequence is VDSQENGIQL…RPLIVTSAWK (369 aa). Residues 216 to 270 form a leucine repeat I (LRI) region; sequence IQLVHALMACAEAVQQNNLNLAEALEKRIGYLAVSQAGAMRKVATFFAEALARRI. The segment at 288-353 is VHIID; that stretch reads QLHFYESSPY…SGPPAFRLTG (66 aa). The VHIID motif lies at 319 to 323; that stretch reads VHVID. Positions 367 to 399 are leucine repeat II (LRII); it reads DVGWKLAKLVETINVEFEYRGFVANSLADLDAS. The segment at 411-498 is PFYRE; that stretch reads VVVNSVFELH…EMYLGKQICN (88 aa). An LXXLL motif motif is present at residues 419 to 423; that stretch reads LHKLL. An SAW region spans residues 501 to 577; the sequence is ACEGSDRVEW…RPLIVTSAWK (77 aa).

This sequence belongs to the GRAS family. DELLA subfamily. Phosphorylated. In terms of processing, ubiquitinated. Upon GA application it is ubiquitinated, leading to its subsequent degradation.

The protein localises to the nucleus. Its function is as follows. Probable transcriptional regulator that acts as a repressor of the gibberellin (GA) signaling pathway. Probably acts by participating in large multiprotein complexes that represses transcription of GA-inducible genes. Upon GA application, it is degraded by the proteasome, allowing the GA signaling pathway. The polypeptide is DELLA protein GAIP-B (GAIPB) (Cucurbita maxima (Pumpkin)).